We begin with the raw amino-acid sequence, 152 residues long: Troponin C (152 aa).

Residue Thr-1 is modified to N-acetylthreonine. 4 consecutive EF-hand domains span residues 9-44, 45-80, 82-117, and 118-152; these read KQIL…LGLL, VKDD…KLKE, LDER…LGDE, and LTEE…SSDA. Residues Asp-131, Asp-133, Ser-135, Thr-137, and Glu-142 each coordinate Ca(2+).

This sequence belongs to the troponin C family.

Its function is as follows. Troponin is the central regulatory protein of striated muscle contraction. Tn consists of three components: Tn-I which is the inhibitor of actomyosin ATPase, Tn-T which contains the binding site for tropomyosin and Tn-C. The binding of calcium to Tn-C abolishes the inhibitory action of Tn on actin filaments. The polypeptide is Troponin C (Mizuhopecten yessoensis (Japanese scallop)).